A 485-amino-acid polypeptide reads, in one-letter code: MPIFQREGHLKYSFAAGEYQAGNYDSASPRFGQLDLIYGLPWGMTAYGGVLISNNYNAFTLGIGKNFGYIGAISIDVTQAKSELNNDRDSQGQSYRFLYSKSFESGTDFRLAGYRYSTSGFYTFQEATDVRSDADSDYNRYHKRSEIQGNLTQQLGAYGSVYLNLTQQDYWNDAGKQNTVSAGYNGRIGKVSYSIAYSWNKSPEWDESDRLWSFNISVPLGRAWSNYRVTTDQDGRTNQQVGVSGTLLEDRNLSYSVQEGYASNGVGNSGNANVGYQGGSGNVNVGYSYGKDYRQLNYSVRGGVIVHSEGVTLSQPLGETMTLISVPGARNARVVNNGGVQVDWMGNAIVPYAMPYRENEISLRSDSLGDDVDVENAFQKVVPTRGAIVRARFDTRVGYRVLMTLLRSAGSPVPFGATATLITDKQNEVSSIVGEEGQLYISGMPEEGRVLIKWGNDASQQCVAPYKLSLELKQGGIIPVSANCQ.

The protein belongs to the fimbrial export usher family.

The protein resides in the cell outer membrane. In terms of biological role, part of the lpfABCC'DE fimbrial operon. LP fimbriae may participate in the interaction with eukaryotic cells by assisting in microcolony formation. Could be involved in the export and assembly of the fimbrial subunits across the outer membrane. The sequence is that of Probable outer membrane usher protein LpfC' (lpfC') from Escherichia coli O157:H7.